Reading from the N-terminus, the 725-residue chain is Fatty acid oxidation complex subunit alpha (725 aa).

Residues 1 to 189 (MIYQGENLSV…ALGMIDGVVS (189 aa)) form an enoyl-CoA hydratase/isomerase region. Aspartate 296 serves as a coordination point for substrate. A 3-hydroxyacyl-CoA dehydrogenase region spans residues 311–725 (EPVTSAAVLG…APQSLSAPSA (415 aa)). Residues methionine 324, aspartate 343, 400–402 (VVE), lysine 407, and serine 429 contribute to the NAD(+) site. Histidine 450 serves as the catalytic For 3-hydroxyacyl-CoA dehydrogenase activity. Asparagine 453 provides a ligand contact to NAD(+). The substrate site is built by asparagine 500 and tyrosine 660.

The protein in the N-terminal section; belongs to the enoyl-CoA hydratase/isomerase family. This sequence in the C-terminal section; belongs to the 3-hydroxyacyl-CoA dehydrogenase family. As to quaternary structure, heterotetramer of two alpha chains (FadB) and two beta chains (FadA).

The catalysed reaction is a (3S)-3-hydroxyacyl-CoA + NAD(+) = a 3-oxoacyl-CoA + NADH + H(+). It carries out the reaction a (3S)-3-hydroxyacyl-CoA = a (2E)-enoyl-CoA + H2O. It catalyses the reaction a 4-saturated-(3S)-3-hydroxyacyl-CoA = a (3E)-enoyl-CoA + H2O. The enzyme catalyses (3S)-3-hydroxybutanoyl-CoA = (3R)-3-hydroxybutanoyl-CoA. The catalysed reaction is a (3Z)-enoyl-CoA = a 4-saturated (2E)-enoyl-CoA. It carries out the reaction a (3E)-enoyl-CoA = a 4-saturated (2E)-enoyl-CoA. It functions in the pathway lipid metabolism; fatty acid beta-oxidation. Functionally, involved in the aerobic and anaerobic degradation of long-chain fatty acids via beta-oxidation cycle. Catalyzes the formation of 3-oxoacyl-CoA from enoyl-CoA via L-3-hydroxyacyl-CoA. It can also use D-3-hydroxyacyl-CoA and cis-3-enoyl-CoA as substrate. In Aliivibrio fischeri (strain MJ11) (Vibrio fischeri), this protein is Fatty acid oxidation complex subunit alpha.